The sequence spans 442 residues: Protein translocase subunit SecF (442 aa).

The tract at residues 1–39 is disordered; it reads MASKAKTGRDDEATSAVELTEATESAVARTDGDSTTDTA. Transmembrane regions (helical) follow at residues 67–87, 187–207, 218–238, 243–263, 301–321, and 331–351; these read WFGV…FRGF, ITKK…LYIT, AITA…LVGF, ATVI…VIVF, LIGV…LGVG, and LIGI…LLVT. The disordered stretch occupies residues 366 to 442; the sequence is VLKRRNSGSP…PTGKRNAGRR (77 aa). Low complexity predominate over residues 402–432; that stretch reads QASSQSAPRAAQGSSKPAPGARPVRPVGTRR. The segment covering 433–442 has biased composition (basic residues); sequence PTGKRNAGRR.

The protein belongs to the SecD/SecF family. SecF subfamily. As to quaternary structure, forms a complex with SecD. Part of the essential Sec protein translocation apparatus which comprises SecA, SecYEG and auxiliary proteins SecDF. Other proteins may also be involved.

The protein localises to the cell membrane. In terms of biological role, part of the Sec protein translocase complex. Interacts with the SecYEG preprotein conducting channel. SecDF uses the proton motive force (PMF) to complete protein translocation after the ATP-dependent function of SecA. This Mycobacterium tuberculosis (strain CDC 1551 / Oshkosh) protein is Protein translocase subunit SecF.